The primary structure comprises 366 residues: Putative [LysW]-aminoadipate semialdehyde/glutamate semialdehyde transaminase (366 aa).

Residues 90–91 and Phe117 each bind pyridoxal 5'-phosphate; that span reads GT. Arg120 contacts substrate. Pyridoxal 5'-phosphate is bound at residue 202 to 205; the sequence is DEVQ. Lys230 carries the N6-(pyridoxal phosphate)lysine modification. Ser254 lines the substrate pocket. A pyridoxal 5'-phosphate-binding site is contributed by Thr255.

Belongs to the class-III pyridoxal-phosphate-dependent aminotransferase family. LysJ subfamily. Homodimer. Requires pyridoxal 5'-phosphate as cofactor.

The protein localises to the cytoplasm. The catalysed reaction is [amino-group carrier protein]-C-terminal-gamma-(L-lysyl)-L-glutamate + 2-oxoglutarate = [amino-group carrier protein]-C-terminal-N-(1-carboxy-5-oxopentan-1-yl)-L-glutamine + L-glutamate. The enzyme catalyses [amino-group carrier protein]-C-terminal-gamma-(L-ornithyl)-L-glutamate + 2-oxoglutarate = [amino-group carrier protein]-C-terminal-gamma-(L-glutamyl-5-semialdehyde)-L-glutamate + L-glutamate. It participates in amino-acid biosynthesis; L-lysine biosynthesis via AAA pathway; L-lysine from L-alpha-aminoadipate (Thermus route): step 4/5. The protein operates within amino-acid biosynthesis; L-arginine biosynthesis. Functionally, involved in both the arginine and lysine biosynthetic pathways. This chain is Putative [LysW]-aminoadipate semialdehyde/glutamate semialdehyde transaminase, found in Pyrococcus furiosus (strain ATCC 43587 / DSM 3638 / JCM 8422 / Vc1).